Consider the following 876-residue polypeptide: DDB1- and CUL4-associated factor 6 (876 aa).

WD repeat units lie at residues 49–88, 92–133, 139–179, 189–229, and 251–290; these read VHDG…VLTT, GHRA…ETNR, CHYG…SCTK, NCRR…TRAT, and NKSC…AREL. 2 stretches are compositionally biased toward basic and acidic residues: residues 288-303 and 312-334; these read RELK…EELR and LRGD…RDGE. 5 disordered regions span residues 288 to 340, 355 to 391, 408 to 485, 498 to 645, and 658 to 691; these read RELK…PNVS, EASE…SSPN, LQPS…TEGT, WSST…NPEL, and EDPS…GPGD. Position 336 is a phosphoserine (Ser336). Composition is skewed to polar residues over residues 375-391 and 409-422; these read TNQP…SSPN and QPST…QAQA. A compositionally biased stretch (basic and acidic residues) spans 456 to 466; sequence HQSDNSNERLS. Residues 499–510 show a composition bias toward low complexity; that stretch reads SSTASSSRGNGS. A compositionally biased stretch (basic and acidic residues) spans 534–544; that stretch reads SETRAPEELSE. Polar residues-rich tracts occupy residues 550–562, 571–584, 603–613, and 621–645; these read ENLT…TAQL, DSNS…SQDS, EQASTESATRH, and PSQT…NPEL. Ser665 is subject to Phosphoserine. Thr670 bears the Phosphothreonine mark. Ser673 bears the Phosphoserine mark. The IQ domain maps to 692–721; the sequence is RRSAVARIQEFFRRRKERKEMEELDTLNIR. WD repeat units lie at residues 734 to 772 and 775 to 814; these read NSRT…HLML and ADNH…RIFN. Phosphoserine occurs at positions 863 and 866.

Interacts with the nuclear receptors NR3C1 and AR in the presence of ligand. Interacts with DDB1, CUL4A and CUL4B.

It is found in the nucleus. It functions in the pathway protein modification; protein ubiquitination. In terms of biological role, ligand-dependent coactivator of nuclear receptors. Enhance transcriptional activity of the nuclear receptors NR3C1 and AR. May function as a substrate receptor for CUL4-DDB1 E3 ubiquitin-protein ligase complex. The protein is DDB1- and CUL4-associated factor 6 (Dcaf6) of Mus musculus (Mouse).